Reading from the N-terminus, the 142-residue chain is MRHYETMFILKPTLVEEEIKSKIEFYKEVITKHHGVIETSLDMGMRNLAYEIKKHKRGYYYVAYFKANPSMILELERLYRINEDVLRFIVIKYESKKEVEAWHALVDRANKKPSHAKEKHEKTEHTHSHHTEETESVGSHSK.

A compositionally biased stretch (basic and acidic residues) spans asparagine 110 to glutamate 133. Positions asparagine 110–lysine 142 are disordered.

It belongs to the bacterial ribosomal protein bS6 family.

Its function is as follows. Binds together with bS18 to 16S ribosomal RNA. This chain is Small ribosomal subunit protein bS6, found in Helicobacter pylori (strain Shi470).